Consider the following 398-residue polypeptide: Phospholipase C (398 aa).

The N-terminal stretch at Met-1–Ala-28 is a signal peptide. The Zn(2+) site is built by Trp-29, His-39, Asp-84, His-96, His-154, Asp-158, His-164, His-176, and Glu-180. The region spanning Trp-29–Ser-278 is the Zn-dependent PLC domain. The segment at Lys-275–Val-283 is linker. Positions Asn-284–Lys-398 constitute a PLAT domain. The Ca(2+) site is built by Gly-299, Thr-300, Asp-301, Asp-321, Asn-322, Gly-324, Asn-325, Asp-326, and Asp-365.

Requires Ca(2+) as cofactor. Zn(2+) serves as cofactor.

The protein resides in the secreted. The enzyme catalyses a 1,2-diacyl-sn-glycero-3-phosphocholine + H2O = phosphocholine + a 1,2-diacyl-sn-glycerol + H(+). Functionally, bacterial hemolysins are exotoxins that attack blood cell membranes and cause cell rupture. Constitutes an essential virulence factor in gas gangrene. Binds to eukaryotic membranes where it hydrolyzes both phosphatidylcholine and sphingomyelin, causing cell rupture. The diacylglycerol produced can activate both the arachidonic acid pathway, leading to modulation of the inflammatory response cascade and thrombosis, and protein kinase C, leading to activation of eukaryotic phospholipases and further membrane damage. The sequence is that of Phospholipase C (plc) from Clostridium perfringens.